The following is a 156-amino-acid chain: Lipoprotein signal peptidase (156 aa).

The next 2 membrane-spanning stretches (helical) occupy residues 52-72 (ILEGQMWLFYIITSIVVIGIV) and 85-105 (FATALALILGGAIGNFIDRIF). Residues Asp111 and Asp129 contribute to the active site. A helical membrane pass occupies residues 121 to 141 (NFPIFNVADSALCVGVGILFL).

The protein belongs to the peptidase A8 family.

The protein localises to the cell membrane. The enzyme catalyses Release of signal peptides from bacterial membrane prolipoproteins. Hydrolyzes -Xaa-Yaa-Zaa-|-(S,diacylglyceryl)Cys-, in which Xaa is hydrophobic (preferably Leu), and Yaa (Ala or Ser) and Zaa (Gly or Ala) have small, neutral side chains.. Its pathway is protein modification; lipoprotein biosynthesis (signal peptide cleavage). Its function is as follows. This protein specifically catalyzes the removal of signal peptides from prolipoproteins. In Halalkalibacterium halodurans (strain ATCC BAA-125 / DSM 18197 / FERM 7344 / JCM 9153 / C-125) (Bacillus halodurans), this protein is Lipoprotein signal peptidase.